Consider the following 183-residue polypeptide: Mid1-interacting protein 1 (183 aa).

Met-1 is subject to N-acetylmethionine. A phosphoserine mark is found at Ser-75 and Ser-79.

This sequence belongs to the SPOT14 family. Homodimer in the absence of THRSP. Heterodimer with THRSP. The homodimer interacts with ACACA and ACACB. Promotes polymerization of Acetyl-CoA carboxylase to form complexes that contain MID1IP1 and ACACA and/or ACACB. Interaction with THRSP interferes with ACACA binding.

The protein resides in the nucleus. It localises to the cytoplasm. The protein localises to the cytoskeleton. In terms of biological role, plays a role in the regulation of lipogenesis in liver. Up-regulates ACACA enzyme activity. Required for efficient lipid biosynthesis, including triacylglycerol, diacylglycerol and phospholipid. Involved in stabilization of microtubules. The polypeptide is Mid1-interacting protein 1 (MID1IP1) (Homo sapiens (Human)).